The chain runs to 55 residues: Large ribosomal subunit protein bL33 (55 aa).

The protein belongs to the bacterial ribosomal protein bL33 family.

The sequence is that of Large ribosomal subunit protein bL33 from Chelativorans sp. (strain BNC1).